The sequence spans 299 residues: 4-hydroxybenzoate octaprenyltransferase (299 aa).

A run of 8 helical transmembrane segments spans residues Val33 to Val53, Trp56 to Ile76, Leu107 to Leu127, Leu151 to Ile171, Trp180 to Val200, Ile213 to Leu233, His247 to Ala267, and Ala278 to Thr298.

This sequence belongs to the UbiA prenyltransferase family. Mg(2+) is required as a cofactor.

The protein resides in the cell inner membrane. The enzyme catalyses all-trans-octaprenyl diphosphate + 4-hydroxybenzoate = 4-hydroxy-3-(all-trans-octaprenyl)benzoate + diphosphate. It functions in the pathway cofactor biosynthesis; ubiquinone biosynthesis. In terms of biological role, catalyzes the prenylation of para-hydroxybenzoate (PHB) with an all-trans polyprenyl group. Mediates the second step in the final reaction sequence of ubiquinone-8 (UQ-8) biosynthesis, which is the condensation of the polyisoprenoid side chain with PHB, generating the first membrane-bound Q intermediate 3-octaprenyl-4-hydroxybenzoate. The chain is 4-hydroxybenzoate octaprenyltransferase from Xylella fastidiosa (strain M12).